Here is a 208-residue protein sequence, read N- to C-terminus: Ribosomal RNA large subunit methyltransferase E (208 aa).

Positions 63, 65, 83, 99, and 124 each coordinate S-adenosyl-L-methionine. Lys164 serves as the catalytic Proton acceptor.

This sequence belongs to the class I-like SAM-binding methyltransferase superfamily. RNA methyltransferase RlmE family.

It localises to the cytoplasm. It catalyses the reaction uridine(2552) in 23S rRNA + S-adenosyl-L-methionine = 2'-O-methyluridine(2552) in 23S rRNA + S-adenosyl-L-homocysteine + H(+). Its function is as follows. Specifically methylates the uridine in position 2552 of 23S rRNA at the 2'-O position of the ribose in the fully assembled 50S ribosomal subunit. This is Ribosomal RNA large subunit methyltransferase E from Salmonella typhi.